The primary structure comprises 630 residues: MDIKGQFWNDDDSEGDNESEEFLYGVQGSCAADLYRHPQLDADIEAVKEIYSENSVSIREYGTIDDVDIDLHINISFLDEEVSTAWKVLRTEPIVLRLRFSLSQYLDGPEPSIEVFQPSNKEGFGLGLQLKKILGMFTSQQWKHLSNDFLKTQQEKRHSWFKASGTIKKFRAGLSIFSPIPKSPSFPIIQDSMLKGKLGVPELRVGRLMNRSISCTMKNPKVEVFGYPPSPQAGLLCPQHVGLPPPARTSPLVSGHCKNIPTLEYGFLVQIMKYAEQRIPTLNEYCVVCDEQHVFQNGSMLKPAVCTRELCVFSFYTLGVMSGAAEEVATGAEVVDLLVAMCRAALESPRKSIIFEPYPSVVDPTDPKTLAFNPKKKNYERLQKALDSVMSIREMTQGSYLEIKKQMDKLDPLAHPLLQWIISSNRSHIVKLPLSRLKFMHTSHQFLLLSSPPAKEARFRTAKKLYGSTFAFHGSHIENWHSILRNGLVNASYTKLQLHGAAYGKGIYLSPISSISFGYSGMGKGQHRMPSKDELVQRYNRMNTIPQTRSIQSRFLQSRNLNCIALCEVITSKDLQKHGNIWVCPVSDHVCTRFFFVYEDGQVGDANINTQDPKIQKEIMRVIGTQVYTN.

Cys237 carries the post-translational modification ADP-ribosylcysteine. In terms of domain architecture, PARP catalytic spans Glu394 to Met620. Residue Asp600 is modified to ADP-ribosyl aspartic acid.

Belongs to the ARTD/PARP family. Post-translationally, auto-mono-ADP-ribosylated.

It catalyses the reaction L-aspartyl-[protein] + NAD(+) = 4-O-(ADP-D-ribosyl)-L-aspartyl-[protein] + nicotinamide. It carries out the reaction L-cysteinyl-[protein] + NAD(+) = S-(ADP-D-ribosyl)-L-cysteinyl-[protein] + nicotinamide + H(+). Mono-ADP-ribosyltransferase that mediates mono-ADP-ribosylation of target proteins. This is Protein mono-ADP-ribosyltransferase PARP6 from Homo sapiens (Human).